A 166-amino-acid chain; its full sequence is Thiol peroxidase (166 aa).

Positions 18–166 constitute a Thioredoxin domain; it reads LKVGDKAPDV…NYEALLKVLK (149 aa). Catalysis depends on cysteine 60, which acts as the Cysteine sulfenic acid (-SOH) intermediate. An intrachain disulfide couples cysteine 60 to cysteine 94.

Belongs to the peroxiredoxin family. Tpx subfamily. As to quaternary structure, homodimer.

The catalysed reaction is a hydroperoxide + [thioredoxin]-dithiol = an alcohol + [thioredoxin]-disulfide + H2O. Functionally, thiol-specific peroxidase that catalyzes the reduction of hydrogen peroxide and organic hydroperoxides to water and alcohols, respectively. Plays a role in cell protection against oxidative stress by detoxifying peroxides. The polypeptide is Thiol peroxidase (Helicobacter pylori (strain ATCC 700392 / 26695) (Campylobacter pylori)).